A 445-amino-acid polypeptide reads, in one-letter code: UDP-N-acetylmuramoylalanine--D-glutamate ligase (445 aa).

117-123 (GSNGKTT) is an ATP binding site.

It belongs to the MurCDEF family.

It localises to the cytoplasm. It carries out the reaction UDP-N-acetyl-alpha-D-muramoyl-L-alanine + D-glutamate + ATP = UDP-N-acetyl-alpha-D-muramoyl-L-alanyl-D-glutamate + ADP + phosphate + H(+). It functions in the pathway cell wall biogenesis; peptidoglycan biosynthesis. In terms of biological role, cell wall formation. Catalyzes the addition of glutamate to the nucleotide precursor UDP-N-acetylmuramoyl-L-alanine (UMA). The polypeptide is UDP-N-acetylmuramoylalanine--D-glutamate ligase (Neisseria meningitidis serogroup A / serotype 4A (strain DSM 15465 / Z2491)).